Consider the following 290-residue polypeptide: UPF0761 membrane protein YihY (290 aa).

Helical transmembrane passes span 44–64 (LLSL…FPMF), 104–124 (VGAC…DSAL), 140–160 (FAVY…SLAI), 183–203 (IFPL…VPTI), 210–230 (AIVG…GFAL), and 244–264 (VLAV…IVLL).

It belongs to the UPF0761 family.

It is found in the cell inner membrane. This chain is UPF0761 membrane protein YihY, found in Shigella sonnei (strain Ss046).